Here is a 628-residue protein sequence, read N- to C-terminus: Phosphomethylpyrimidine synthase (628 aa).

Residues Asn225, Met254, Tyr283, His319, 339-341 (SRG), 380-383 (DGLR), and Glu419 contribute to the substrate site. Residue His423 participates in Zn(2+) binding. Substrate is bound at residue Tyr446. His487 serves as a coordination point for Zn(2+). Positions 567, 570, and 575 each coordinate [4Fe-4S] cluster.

Belongs to the ThiC family. In terms of assembly, homodimer. [4Fe-4S] cluster serves as cofactor.

It carries out the reaction 5-amino-1-(5-phospho-beta-D-ribosyl)imidazole + S-adenosyl-L-methionine = 4-amino-2-methyl-5-(phosphooxymethyl)pyrimidine + CO + 5'-deoxyadenosine + formate + L-methionine + 3 H(+). Its pathway is cofactor biosynthesis; thiamine diphosphate biosynthesis. Its function is as follows. Catalyzes the synthesis of the hydroxymethylpyrimidine phosphate (HMP-P) moiety of thiamine from aminoimidazole ribotide (AIR) in a radical S-adenosyl-L-methionine (SAM)-dependent reaction. The chain is Phosphomethylpyrimidine synthase from Leptothrix cholodnii (strain ATCC 51168 / LMG 8142 / SP-6) (Leptothrix discophora (strain SP-6)).